The primary structure comprises 39 residues: Photosystem II reaction center protein L (39 aa).

A helical transmembrane segment spans residues 18 to 38 (SLYLGLLLIAVLGILFSSYFF).

It belongs to the PsbL family. PSII is composed of 1 copy each of membrane proteins PsbA, PsbB, PsbC, PsbD, PsbE, PsbF, PsbH, PsbI, PsbJ, PsbK, PsbL, PsbM, PsbT, PsbX, PsbY, PsbZ, Psb30/Ycf12, peripheral proteins PsbO, CyanoQ (PsbQ), PsbU, PsbV and a large number of cofactors. It forms dimeric complexes.

Its subcellular location is the cellular thylakoid membrane. Its function is as follows. One of the components of the core complex of photosystem II (PSII). PSII is a light-driven water:plastoquinone oxidoreductase that uses light energy to abstract electrons from H(2)O, generating O(2) and a proton gradient subsequently used for ATP formation. It consists of a core antenna complex that captures photons, and an electron transfer chain that converts photonic excitation into a charge separation. This subunit is found at the monomer-monomer interface and is required for correct PSII assembly and/or dimerization. In Picosynechococcus sp. (strain ATCC 27264 / PCC 7002 / PR-6) (Agmenellum quadruplicatum), this protein is Photosystem II reaction center protein L.